We begin with the raw amino-acid sequence, 393 residues long: Arginine biosynthesis bifunctional protein ArgJ (393 aa).

6 residues coordinate substrate: T142, K168, T179, E265, N388, and S393. T179 (nucleophile) is an active-site residue.

It belongs to the ArgJ family. In terms of assembly, heterotetramer of two alpha and two beta chains.

It localises to the cytoplasm. The enzyme catalyses N(2)-acetyl-L-ornithine + L-glutamate = N-acetyl-L-glutamate + L-ornithine. The catalysed reaction is L-glutamate + acetyl-CoA = N-acetyl-L-glutamate + CoA + H(+). The protein operates within amino-acid biosynthesis; L-arginine biosynthesis; L-ornithine and N-acetyl-L-glutamate from L-glutamate and N(2)-acetyl-L-ornithine (cyclic): step 1/1. It functions in the pathway amino-acid biosynthesis; L-arginine biosynthesis; N(2)-acetyl-L-ornithine from L-glutamate: step 1/4. Functionally, catalyzes two activities which are involved in the cyclic version of arginine biosynthesis: the synthesis of N-acetylglutamate from glutamate and acetyl-CoA as the acetyl donor, and of ornithine by transacetylation between N(2)-acetylornithine and glutamate. This is Arginine biosynthesis bifunctional protein ArgJ from Desulfotalea psychrophila (strain LSv54 / DSM 12343).